Reading from the N-terminus, the 274-residue chain is Halorhodopsin (274 aa).

Residues 1-21 (MSITSVPGVVDAGVLGAQSAA) constitute a propeptide that is removed on maturation. Topologically, residues 22–25 (AVRE) are extracellular. The helical transmembrane segment at 26–51 (NALLSSSLWVNVALAGIAILVFVYMG) threads the bilayer. Over 52-57 (RTIRPG) the chain is Cytoplasmic. The chain crosses the membrane as a helical span at residues 58-81 (RPRLIWGATLMIPLVSISSYLGLL). Over 82 to 105 (SGLTVGMIEMPAGHALAGEMVRSQ) the chain is Extracellular. Chloride-binding residues include Gln-105, Thr-111, and Ser-115. A helical membrane pass occupies residues 106 to 127 (WGRYLTWALSTPMILLALGLLA). The Cytoplasmic segment spans residues 128–130 (DVD). A helical transmembrane segment spans residues 131–154 (LGSLFTVIAADIGMCVTGLAAAMT). The Extracellular portion of the chain corresponds to 155 to 157 (TSA). Residues 158-180 (LLFRWAFYAISCAFFVVVLSALV) traverse the membrane as a helical segment. The Cytoplasmic segment spans residues 181–192 (TDWAASASSAGT). Residues 193 to 216 (AEIFDTLRVLTVVLWLGYPIVWAV) form a helical membrane-spanning segment. Residues 217-226 (GVEGLALVQS) are Extracellular-facing. A helical transmembrane segment spans residues 227-255 (VGVTSWAYSVLDVFAKYVFAFILLRWVAN). Position 242 is an N6-(retinylidene)lysine (Lys-242). The Cytoplasmic portion of the chain corresponds to 256–274 (NERTVAVAGQTLGTMSSDD).

This sequence belongs to the archaeal/bacterial/fungal opsin family. As to quaternary structure, homotrimer.

The protein resides in the cell membrane. In terms of biological role, light-driven chloride pump. The chain is Halorhodopsin (hop) from Halobacterium salinarum (strain ATCC 29341 / DSM 671 / R1).